Here is an 805-residue protein sequence, read N- to C-terminus: Phosphoinositide 3-kinase adapter protein 1 (805 aa).

The TIR domain occupies 8-145 (RGCDILIVYS…AVKKAISEDS (138 aa)). Residues 10–144 (CDILIVYSPD…AAVKKAISED (135 aa)) are necessary and sufficient to mediate inhibition of NF-kappa-B downstream of activated TLRs; may mediate interaction with MYD88 and TIRAP. The disordered stretch occupies residues 145 to 165 (SGCDSVTDTEPEDEKVVSYSK). A DBB domain is found at 181 to 317 (VQPDRIRCGA…NIPASGLHLF (137 aa)). Tyr263 bears the Phosphotyrosine mark. Tyr419, Tyr444, and Tyr459 each carry phosphotyrosine; by SYK. Tyr513 is modified (phosphotyrosine; by ABL1). The tract at residues 527 to 547 (ASRPPVPVPRPETTAPGAHQL) is disordered. A phosphotyrosine; by ABL1 mark is found at Tyr553 and Tyr570. Residues 571 to 590 (VSSESIRKGPPVRPWRDRPQ) are disordered. Tyr594 is modified (phosphotyrosine; by ABL1). Residue Ser642 is modified to Phosphoserine. Positions 645–667 (FQQENLKRLRDSITRRQREKQKS) form a coiled coil. A compositionally biased stretch (basic and acidic residues) spans 654–672 (RDSITRRQREKQKSGKQTD). The disordered stretch occupies residues 654-679 (RDSITRRQREKQKSGKQTDLEITVPI). At Tyr694 the chain carries Phosphotyrosine; by ABL1. The disordered stretch occupies residues 697–805 (GPRKSVIPPR…PPPPVPPRGR (109 aa)). Over residues 707 to 716 (TELRRGDWKT) the composition is skewed to basic and acidic residues. Residues 717 to 740 (DSTSSTASSTSNRSSTRSLLSVSS) show a composition bias toward low complexity. Ser718 bears the Phosphoserine mark. Pro residues predominate over residues 795–805 (HPPPPVPPRGR).

As to quaternary structure, homooligomer. Interacts (phosphorylated on tyrosine residues within YXXM motifs) with PIK3R1 (via SH2 domain); required for BCR- and TLR-mediated activation of phosphoinositide 3-kinase. Interacts (via polyproline C-terminal region) with ABI1 (via SH3 domain); the interaction promotes phosphorylation of PIK3AP1 by ABL1. May interact with MYD88 and TIRAP. In terms of processing, constitutively phosphorylated. Phosphorylated on tyrosine residues in C-terminal region by ABL1. Phosphorylated on tyrosine residues within the YXXM motifs by BTK and SYK. Isoform 1 and isoform 2 are phosphorylated on tyrosine residues, most likely within the YXXM motifs, via CD19 activation. Toll-like receptor activation induces appearance of a phosphorylated form associated with membranes. Expressed in natural killer (NK) cells.

The protein resides in the cytoplasm. The protein localises to the cell membrane. Signaling adapter that contributes to B-cell development by linking B-cell receptor (BCR) signaling to the phosphoinositide 3-kinase (PI3K)-Akt signaling pathway. Has a complementary role to the BCR coreceptor CD19, coupling BCR and PI3K activation by providing a docking site for the PI3K subunit PIK3R1. Alternatively, links Toll-like receptor (TLR) signaling to PI3K activation, a process preventing excessive inflammatory cytokine production. Also involved in the activation of PI3K in natural killer cells. May be involved in the survival of mature B-cells via activation of REL. The polypeptide is Phosphoinositide 3-kinase adapter protein 1 (PIK3AP1) (Homo sapiens (Human)).